A 363-amino-acid chain; its full sequence is Phosphoserine aminotransferase (363 aa).

R42 lines the L-glutamate pocket. Residues 76 to 77 (AS), W101, T151, D170, and Q193 each bind pyridoxal 5'-phosphate. K194 carries the N6-(pyridoxal phosphate)lysine modification. 234 to 235 (NT) serves as a coordination point for pyridoxal 5'-phosphate.

It belongs to the class-V pyridoxal-phosphate-dependent aminotransferase family. SerC subfamily. Homodimer. It depends on pyridoxal 5'-phosphate as a cofactor.

It is found in the cytoplasm. The enzyme catalyses O-phospho-L-serine + 2-oxoglutarate = 3-phosphooxypyruvate + L-glutamate. It catalyses the reaction 4-(phosphooxy)-L-threonine + 2-oxoglutarate = (R)-3-hydroxy-2-oxo-4-phosphooxybutanoate + L-glutamate. It participates in amino-acid biosynthesis; L-serine biosynthesis; L-serine from 3-phospho-D-glycerate: step 2/3. Its function is as follows. Catalyzes the reversible conversion of 3-phosphohydroxypyruvate to phosphoserine and of 3-hydroxy-2-oxo-4-phosphonooxybutanoate to phosphohydroxythreonine. This Listeria innocua serovar 6a (strain ATCC BAA-680 / CLIP 11262) protein is Phosphoserine aminotransferase.